The sequence spans 303 residues: tRNA pseudouridine synthase B (303 aa).

Aspartate 38 functions as the Nucleophile in the catalytic mechanism.

This sequence belongs to the pseudouridine synthase TruB family. Type 1 subfamily.

The enzyme catalyses uridine(55) in tRNA = pseudouridine(55) in tRNA. Functionally, responsible for synthesis of pseudouridine from uracil-55 in the psi GC loop of transfer RNAs. The chain is tRNA pseudouridine synthase B from Oceanobacillus iheyensis (strain DSM 14371 / CIP 107618 / JCM 11309 / KCTC 3954 / HTE831).